Consider the following 251-residue polypeptide: Putative fatty acid elongase DDB_G0274669 (251 aa).

5 consecutive transmembrane segments (helical) span residues Phe51–Leu71, Phe82–Val102, Trp135–Leu155, Tyr177–Val197, and Ala211–Val231.

This sequence belongs to the ELO family.

The protein resides in the membrane. It catalyses the reaction a very-long-chain acyl-CoA + malonyl-CoA + H(+) = a very-long-chain 3-oxoacyl-CoA + CO2 + CoA. Could be implicated in synthesis of very long chain fatty acids. The polypeptide is Putative fatty acid elongase DDB_G0274669 (Dictyostelium discoideum (Social amoeba)).